The sequence spans 526 residues: Osmo-independent choline transporter BetT1 (526 aa).

Over 1-17 (MWSKRDEQKTYPPIRLN) the chain is Cytoplasmic. A helical membrane pass occupies residues 18 to 38 (PFVFWSSAISISIFGMLFVLF). The Periplasmic portion of the chain corresponds to 39-56 (PETSQHGLTWIQQQVNQL). The helical transmembrane segment at 57–77 (FGWYYMLVIILSLGFVAWLAF) threads the bilayer. Residues 78 to 93 (SQVGNIPLGKAQDKPE) lie on the Cytoplasmic side of the membrane. The helical transmembrane segment at 94–114 (FGYLVWTSMLFSAGIGIALLY) threads the bilayer. Residues 115 to 148 (YGVAEPVDHFLRPPEGQGGTVEAAQNAMMYSFLH) lie on the Periplasmic side of the membrane. Residues 149–169 (WGIHGWVLYALVGVTLGYFAF) traverse the membrane as a helical segment. Residues 170 to 200 (RRDLPLALRSALYPIFGERIHGLVGHMVDGF) are Cytoplasmic-facing. Residues 201–221 (GILATIISLVTNLGIGALVMI) traverse the membrane as a helical segment. Residues 222-236 (SGISYLFPDLPNTSS) are Periplasmic-facing. Residues 237-257 (TLVVTVIMMMLVATLTTVIGI) form a helical membrane-spanning segment. At 258 to 272 (EKGLAWLSRINLRLL) the chain is on the cytoplasmic side. A helical transmembrane segment spans residues 273-293 (YLLLLFVFLTGPTNHLLNGLV). The Periplasmic portion of the chain corresponds to 294-323 (QNTGDYLSHFVQKSFDLYLYDKNATGWLAS). A helical membrane pass occupies residues 324-344 (WTIFYWAWWIAWAPFVGMFIA). Residues 345-354 (RISKGRTIRE) are Cytoplasmic-facing. The helical transmembrane segment at 355–375 (VVLGVCLIPLGFTLAWISIFG) threads the bilayer. The Periplasmic portion of the chain corresponds to 376-417 (NTAIDLILNHGQQIIGSLVIQDPALSLFKLLEYLPFHPYVAG). A helical transmembrane segment spans residues 418 to 438 (IVVVICFVLFLTPVGSGTLMI). The Cytoplasmic segment spans residues 439 to 457 (ANLSSQGGSSDSDSPIWLR). A helical transmembrane segment spans residues 458–478 (VFWSIAITIVSIGLLLAGSFS). At 479-482 (AMQS) the chain is on the periplasmic side. Residues 483 to 503 (AVVLCGLPFSVILLLYMFGLA) form a helical membrane-spanning segment. Residues 504–526 (KALKQETQQPVVESHTTETSGSD) are Cytoplasmic-facing.

This sequence belongs to the BCCT transporter (TC 2.A.15) family.

The protein localises to the cell inner membrane. Functionally, sodium-independent high-affinity choline uptake system. Uptake is not proton coupled. May play a role in metabolic adaptation to choline-containing environments. This chain is Osmo-independent choline transporter BetT1, found in Acinetobacter baylyi (strain ATCC 33305 / BD413 / ADP1).